Reading from the N-terminus, the 466-residue chain is MAFNTETFMLKNQAAIQLYEEVKRQPIFDYHCHLDPKDIFEDHIFDNIVDLWLGGDHYKWRLMRANGISEAEITGPASNLEKFKAFARTLERAYGNPVYHWSAMELKNVFGVNEILTESNAEEIYHRLNHFLKEHKISPRRLIADSKVMFIGTTDHPLDTLEWHKKLAADESFKTVVAPTFRPDEAFIEHRHFVDFITKLGDITQKEITDFSTFIAAMEERIAYFAQNGCRASDISFTEIVFEQTDELELNDLFNKVCEGYIPNQSEISKWQTAVFMELCRLYKKYGFVTQVHFGALRNNHSTIFEKLGADVGVDSLGDQVALTVNMNRLLDSLVKKDSLPKMIWYNLNPAYNIAVANTLANFQANELGVRSYLQFGAGWWFADTKLGMISQMNALAEQGMLANFIGMLTDSRSFLSYQRHDYFRRILCTYLGEWIEEGEVPEDYQALGSMAKDIAYQNAVNYFKN.

The protein belongs to the metallo-dependent hydrolases superfamily. Uronate isomerase family.

It carries out the reaction D-glucuronate = D-fructuronate. The catalysed reaction is aldehydo-D-galacturonate = keto-D-tagaturonate. It functions in the pathway carbohydrate metabolism; pentose and glucuronate interconversion. In Streptococcus agalactiae serotype V (strain ATCC BAA-611 / 2603 V/R), this protein is Uronate isomerase.